We begin with the raw amino-acid sequence, 1051 residues long: Kinesin-like protein KIN-4B (1051 aa).

The segment at 1-21 (MESHSSLSSSSSSSPPSSLSS) is disordered. A Kinesin motor domain is found at 25 to 380 (CVKVAVNVRP…LKYANRARNI (356 aa)). Residue 104–111 (GQTGSGKT) participates in ATP binding. 2 coiled-coil regions span residues 414-448 (ATSSEEVQVMREKIMKLESANEELSRELHIYRSKR) and 540-644 (RQHF…KMKQ). Over residues 916-925 (SSSYSGSSRS) the composition is skewed to low complexity. Disordered stretches follow at residues 916 to 946 (SSSYSGSSRSSSKHYGDNNASDDPSSPSSTY) and 1029 to 1051 (MSKSHHDDEDDHSWNRHSMFQGA).

It belongs to the TRAFAC class myosin-kinesin ATPase superfamily. Kinesin family. KIN-4 subfamily. As to quaternary structure, homodimer.

Functionally, kinesin-like motor protein involved in the control of the oriented deposition of cellulose microfibrils. The protein is Kinesin-like protein KIN-4B of Arabidopsis thaliana (Mouse-ear cress).